We begin with the raw amino-acid sequence, 89 residues long: Small ribosomal subunit protein bS18 (89 aa).

The protein belongs to the bacterial ribosomal protein bS18 family. As to quaternary structure, part of the 30S ribosomal subunit. Forms a tight heterodimer with protein bS6.

Functionally, binds as a heterodimer with protein bS6 to the central domain of the 16S rRNA, where it helps stabilize the platform of the 30S subunit. This Parabacteroides distasonis (strain ATCC 8503 / DSM 20701 / CIP 104284 / JCM 5825 / NCTC 11152) protein is Small ribosomal subunit protein bS18.